The following is a 754-amino-acid chain: C2H2 finger domain transcription factor crzA (754 aa).

5 disordered regions span residues 1 to 51, 63 to 150, 187 to 227, 269 to 299, and 384 to 543; these read MASQ…TVTG, SFAN…FSDL, VHQQ…QGST, QGHRRAPSEVSEISSAAPSPYLSQHESFDGV, and GAEG…RVQK. Over residues 30-44 the composition is skewed to low complexity; the sequence is HQQQQQQQHQQHQGQ. Composition is skewed to polar residues over residues 63 to 80 and 94 to 114; these read SFANSSFDPNSNNVSPSA and TPASQTDQNYANSLQIPQSYG. A compositionally biased stretch (low complexity) spans 130-140; the sequence is QQQSQQQHHQQ. A compositionally biased stretch (polar residues) spans 141 to 150; sequence PSLDDNFSDL. Residues 189–209 are compositionally biased toward low complexity; sequence QQSHPTQIPSSHSSTSPQISP. Composition is skewed to polar residues over residues 210 to 227 and 279 to 293; these read LEQQQHSSPGPMSTQGST and SEISSAAPSPYLSQH. 2 stretches are compositionally biased toward low complexity: residues 459-472 and 491-515; these read STSRLRSSSTSSSL and RQQQSNPSSRDPSPSRSNRRLSTSS. 2 C2H2-type zinc fingers span residues 548-570 and 576-598; these read FQCNLCPKRFTRAYNLRSHLRTH and FVCTVCGKAFARQHDRKRHEGLH. Residues 604-635 form a C2H2-type 3; degenerate zinc finger; that stretch reads FVCQGELSRGGQWGCGRRFARADALGRHFRSE. The tract at residues 708 to 737 is disordered; the sequence is ADDPSDIGGRSSFDASSGNEFGFEDDDSGL.

The protein resides in the nucleus. The protein localises to the cytoplasm. Transcription factor involved in the regulation of calcium ion homeostasis. Regulates genes encoding calcium transporters, transcription factors and genes that could be directly or indirectly involved in calcium metabolism. Supports especially pmcA, pmcB and pmcC expression encoding for calcium-translocating P-type ATPases. Binds target promoters at motif A[GT][CG]CA[AC][AG]. Plays an essential role germination, radial growth, and asexual development. Also plays a major role in proper chitin and glucan incorporation into the cell wall. Involved in the high-osmolarity glycerol response (HOG) signaling pathway. Required for pathogenicity in an experimental murine model of invasive pulmonary aspergillosis. In Aspergillus fumigatus (strain ATCC MYA-4609 / CBS 101355 / FGSC A1100 / Af293) (Neosartorya fumigata), this protein is C2H2 finger domain transcription factor crzA.